The primary structure comprises 613 residues: Na(+)/H(+) antiporter NhaA 1 (613 aa).

The tract at residues 1–24 (MTEASARTIGPLPSRFSRDPKTPR) is disordered. The tract at residues 1–408 (MTEASARTIG…DPARQDEARV (408 aa)) is na(+)/H(+) antiporter NhaA. The next 11 helical transmembrane spans lie at 29–49 (AAAALLLAFTVLAILWANSPW), 81–101 (GLMAFFFFIVGLEVKSEFVIG), 110–130 (AVPVVAAIAGLIVPAVIFLTF), 138–158 (QAWGVVISTDTAFLVGALAVI), 168–188 (IFLLTLAVVDDVGALGAIALF), 191–211 (DDLKLAPLAVAALLIAALAMV), 231–251 (IALYLAHVHPTLAGVAVAVLI), 300–320 (AVGPYVSFVVLPIFALANAGV), 337–357 (WGIVAGLVVGKFVGITAATAL), 377–397 (GGAALSGIGFTISLFIVDVAI), and 408–428 (VGVLIASVLAFTLSWALFRIT). In terms of domain architecture, Thioredoxin spans 409 to 613 (GVLIASVLAF…SLIRALEAGR (205 aa)).

This sequence in the N-terminal section; belongs to the NhaA Na(+)/H(+) (TC 2.A.33) antiporter family.

Its subcellular location is the cell membrane. The catalysed reaction is Na(+)(in) + 2 H(+)(out) = Na(+)(out) + 2 H(+)(in). Na(+)/H(+) antiporter that extrudes sodium in exchange for external protons. The sequence is that of Na(+)/H(+) antiporter NhaA 1 from Mycobacterium sp. (strain JLS).